A 229-amino-acid polypeptide reads, in one-letter code: Large ribosomal subunit protein uL1 (229 aa).

The protein belongs to the universal ribosomal protein uL1 family. In terms of assembly, part of the 50S ribosomal subunit.

Binds directly to 23S rRNA. The L1 stalk is quite mobile in the ribosome, and is involved in E site tRNA release. In terms of biological role, protein L1 is also a translational repressor protein, it controls the translation of the L11 operon by binding to its mRNA. In Haemophilus influenzae (strain PittEE), this protein is Large ribosomal subunit protein uL1.